Here is a 100-residue protein sequence, read N- to C-terminus: uncharacterized protein (100 aa).

This is an uncharacterized protein from Acidianus convivator (ATV).